Consider the following 549-residue polypeptide: Protein X92 (549 aa).

The polypeptide is Protein X92 (Trypanosoma brucei brucei).